Consider the following 522-residue polypeptide: Chromosomal replication initiator protein DnaA (522 aa).

The segment at 1 to 71 is domain I, interacts with DnaA modulators; sequence MQDFWHAASA…QSLACDYWEM (71 aa). Positions 71–185 are domain II; it reads MQVDVQFVLD…PVDDTVHERS (115 aa). Residues 186 to 402 are domain III, AAA+ region; sequence RLNPILTFDN…GALRKILAYS (217 aa). ATP is bound by residues G230, G232, K233, and T234. Residues 403–522 form a domain IV, binds dsDNA region; sequence NFHGKEITIE…LHVLEQTLKG (120 aa).

The protein belongs to the DnaA family. Oligomerizes as a right-handed, spiral filament on DNA at oriC.

The protein resides in the cytoplasm. Functionally, plays an essential role in the initiation and regulation of chromosomal replication. ATP-DnaA binds to the origin of replication (oriC) to initiate formation of the DNA replication initiation complex once per cell cycle. Binds the DnaA box (a 9 base pair repeat at the origin) and separates the double-stranded (ds)DNA. Forms a right-handed helical filament on oriC DNA; dsDNA binds to the exterior of the filament while single-stranded (ss)DNA is stabiized in the filament's interior. The ATP-DnaA-oriC complex binds and stabilizes one strand of the AT-rich DNA unwinding element (DUE), permitting loading of DNA polymerase. After initiation quickly degrades to an ADP-DnaA complex that is not apt for DNA replication. Binds acidic phospholipids. The chain is Chromosomal replication initiator protein DnaA from Ralstonia nicotianae (strain ATCC BAA-1114 / GMI1000) (Ralstonia solanacearum).